The following is a 157-amino-acid chain: NADPH-dependent 7-cyano-7-deazaguanine reductase (157 aa).

Catalysis depends on cysteine 56, which acts as the Thioimide intermediate. Residue aspartate 63 is the Proton donor of the active site. Substrate is bound by residues 78 to 80 and 97 to 98; these read VES and HE.

It belongs to the GTP cyclohydrolase I family. QueF type 1 subfamily.

It localises to the cytoplasm. The catalysed reaction is 7-aminomethyl-7-carbaguanine + 2 NADP(+) = 7-cyano-7-deazaguanine + 2 NADPH + 3 H(+). The protein operates within tRNA modification; tRNA-queuosine biosynthesis. Functionally, catalyzes the NADPH-dependent reduction of 7-cyano-7-deazaguanine (preQ0) to 7-aminomethyl-7-deazaguanine (preQ1). This is NADPH-dependent 7-cyano-7-deazaguanine reductase from Parabacteroides distasonis (strain ATCC 8503 / DSM 20701 / CIP 104284 / JCM 5825 / NCTC 11152).